The sequence spans 114 residues: NTGGKAPRKHIAHKQAKKSSAAAATGGVKKPHRFRPGTVALREIRRFQKSTELLIRKLPFQRLVREIAQEYKSDLRFQSQAVLALQEAAEAYMVGLFEDTNLCAIHAKRVTIMP.

The segment covering 1-17 (NTGGKAPRKHIAHKQAK) has biased composition (basic residues). Residues 1-32 (NTGGKAPRKHIAHKQAKKSSAAAATGGVKKPH) form a disordered region. Over residues 18–28 (KSSAAAATGGV) the composition is skewed to low complexity.

It belongs to the histone H3 family. In terms of assembly, the nucleosome is a histone octamer containing two molecules each of H2A, H2B, H3 and H4 assembled in one H3-H4 heterotetramer and two H2A-H2B heterodimers. The octamer wraps approximately 147 bp of DNA.

Its subcellular location is the nucleus. It is found in the chromosome. Core component of nucleosome. Nucleosomes wrap and compact DNA into chromatin, limiting DNA accessibility to the cellular machineries which require DNA as a template. Histones thereby play a central role in transcription regulation, DNA repair, DNA replication and chromosomal stability. DNA accessibility is regulated via a complex set of post-translational modifications of histones, also called histone code, and nucleosome remodeling. In Stylonychia lemnae (Ciliate), this protein is Histone H3-6 (H3-6).